The primary structure comprises 601 residues: Glutathione-regulated potassium-efflux system protein KefB (601 aa).

The next 13 helical transmembrane spans lie at 4–24 (ADLL…VPLA), 29–49 (IGAV…GLGF), 55–75 (EILH…GLEL), 87–107 (IFGV…GLLM), 111–131 (FLWQ…TAMA), 152–172 (VLLF…LLAG), 177–197 (HFDW…LIGG), 207–227 (FIAA…LVLS), 230–250 (LFMD…GVLL), 262–282 (AIDP…GMSL), 284–304 (LGVL…LVAI), 324–344 (MQFA…FSTA), and 356–376 (ALLL…MKGI). In terms of domain architecture, RCK N-terminal spans 400-519 (KPQVIVVGFG…AGVTQFSRET (120 aa)).

It belongs to the monovalent cation:proton antiporter 2 (CPA2) transporter (TC 2.A.37) family. KefB subfamily. Interacts with the regulatory subunit KefG.

It is found in the cell inner membrane. Functionally, pore-forming subunit of a potassium efflux system that confers protection against electrophiles. Catalyzes K(+)/H(+) antiport. The polypeptide is Glutathione-regulated potassium-efflux system protein KefB (Salmonella schwarzengrund (strain CVM19633)).